The chain runs to 503 residues: Na(+)-translocating NADH-quinone reductase subunit B (503 aa).

A run of 5 helical transmembrane segments spans residues 55–75 (MMLVVIALMPTVFVAIWNSGL), 85–105 (PQIMEAFLHISGFTSYFSFVS), 120–142 (IFLPLLFISYAVGGTCEVLFAII), 161–181 (ILPPTIPYWMAALGIAFGVVI), and 186–206 (FGGTGMNILNPALTGRAFLFF). Threonine 248 carries the FMN phosphoryl threonine modification. 5 helical membrane passes run 361–381 (TSTVACLLGAGLLLLTGIASW), 387–407 (FGLSSLFFAWLFKIISILAAG), 417–437 (FFIPVYRHLFIGGLAFGLVFM), 452–472 (WFYGAFIGFLTILIRLINPAY), and 475–495 (GVMLAILLGNVFAPSFDRIAL).

The protein belongs to the NqrB/RnfD family. In terms of assembly, composed of six subunits; NqrA, NqrB, NqrC, NqrD, NqrE and NqrF. FMN serves as cofactor.

Its subcellular location is the cell inner membrane. The catalysed reaction is a ubiquinone + n Na(+)(in) + NADH + H(+) = a ubiquinol + n Na(+)(out) + NAD(+). Functionally, NQR complex catalyzes the reduction of ubiquinone-1 to ubiquinol by two successive reactions, coupled with the transport of Na(+) ions from the cytoplasm to the periplasm. NqrA to NqrE are probably involved in the second step, the conversion of ubisemiquinone to ubiquinol. This chain is Na(+)-translocating NADH-quinone reductase subunit B, found in Chlamydia muridarum (strain MoPn / Nigg).